The chain runs to 262 residues: Thioredoxin-like protein HCF164, chloroplastic (262 aa).

A chloroplast-targeting transit peptide spans 1–54; it reads MAVVASRCTGLLLPDLGASLAGFRRRRSTPASSLSFRPRRARRRLGSLSCIAPP. Residues 47-90 form a disordered region; that stretch reads SLSCIAPPDSAEPQTDEPAAKDDSTEDKAEASSASQDAGNPTFP. Positions 64–76 are enriched in basic and acidic residues; that stretch reads PAAKDDSTEDKAE. Positions 78–89 are enriched in polar residues; that stretch reads SSASQDAGNPTF. Residues 78 to 230 enclose the Thioredoxin domain; sequence SSASQDAGNP…FLDNVVALAS (153 aa). Catalysis depends on nucleophile residues C151 and C154. An intrachain disulfide couples C151 to C154.

The protein belongs to the thioredoxin family.

It is found in the plastid. It localises to the chloroplast. Its function is as follows. Probable thiol-disulfide oxidoreductase that may participate in various redox reactions in the chloroplast. This is Thioredoxin-like protein HCF164, chloroplastic from Oryza sativa subsp. japonica (Rice).